The sequence spans 352 residues: GTPase Obg (352 aa).

The Obg domain occupies 1–159 (MHFLDQAKIY…MWVWLRLKLL (159 aa)). The OBG-type G domain occupies 160-327 (ADVGLLGLPN…LLDAVLGYLP (168 aa)). GTP-binding positions include 166 to 173 (GLPNAGKS), 191 to 195 (FTTLV), 212 to 215 (DIPG), 279 to 282 (NKLD), and 308 to 310 (SGA). Mg(2+) is bound by residues serine 173 and threonine 193. The tract at residues 329-352 (STSTETKGSEVEEVDEEGGEWSPI) is disordered. The segment covering 339 to 352 (VEEVDEEGGEWSPI) has biased composition (acidic residues).

The protein belongs to the TRAFAC class OBG-HflX-like GTPase superfamily. OBG GTPase family. Monomer. The cofactor is Mg(2+).

The protein resides in the cytoplasm. Its function is as follows. An essential GTPase which binds GTP, GDP and possibly (p)ppGpp with moderate affinity, with high nucleotide exchange rates and a fairly low GTP hydrolysis rate. Plays a role in control of the cell cycle, stress response, ribosome biogenesis and in those bacteria that undergo differentiation, in morphogenesis control. The polypeptide is GTPase Obg (Erythrobacter litoralis (strain HTCC2594)).